Reading from the N-terminus, the 447-residue chain is UMP-CMP kinase 2, mitochondrial (447 aa).

The N-terminal 73 residues, 1–73 (MALISRPRAP…ELLGPPGRSY (73 aa)), are a transit peptide targeting the mitochondrion. 259 to 266 (GLDATGKT) serves as a coordination point for ATP. The stretch at 380–412 (EERVRRLQGRGQEKTKEEAELEANNVFRQKVEM) forms a coiled coil.

The protein belongs to the thymidylate kinase family. In terms of tissue distribution, strongly expressed in the brain.

It is found in the mitochondrion. The catalysed reaction is CMP + ATP = CDP + ADP. It carries out the reaction dCMP + ATP = dCDP + ADP. The enzyme catalyses a 2'-deoxyribonucleoside 5'-diphosphate + ATP = a 2'-deoxyribonucleoside 5'-triphosphate + ADP. It catalyses the reaction a ribonucleoside 5'-diphosphate + ATP = a ribonucleoside 5'-triphosphate + ADP. Mitochondrial nucleotide monophosphate kinase needed for salvage dNTP synthesis that mediates immunomodulatory and antiviral activities through IFN-dependent and IFN-independent pathways. Restricts the replication of multiple viruses including flaviviruses or coronaviruses. Together with viperin/RSAD2 and ddhCTP, suppresses the replication of several coronaviruses through inhibition of the viral RNA-dependent RNA polymerase activities. Concerning flaviviruses, restricts RNA translation when localized to the mitochondria independently of its kinase activity. Is able to phosphorylate dUMP, dCMP, CMP, UMP and monophosphates of the pyrimidine nucleoside analogs ddC, dFdC, araC, BVDU and FdUrd with ATP as phosphate donor. Efficacy is highest for dUMP followed by dCMP while CMP and UMP are poor substrates. Controls therefore mitochondrial DNA synthesis by supplying required deoxyribonucleotides. CMPK2-dependent mitochondrial DNA synthesis is necessary for the production of oxidized mitochondrial DNA fragments after exposure to NLRP3 activators. In turn, cytosolic oxidized mtDNA associates with the NLRP3 inflammasome complex and is required for its activation. The sequence is that of UMP-CMP kinase 2, mitochondrial (Cmpk2) from Mus musculus (Mouse).